A 250-amino-acid polypeptide reads, in one-letter code: Probable transcriptional regulatory protein RHA1_ro06891 (250 aa).

This sequence belongs to the TACO1 family.

The protein resides in the cytoplasm. The polypeptide is Probable transcriptional regulatory protein RHA1_ro06891 (Rhodococcus jostii (strain RHA1)).